The sequence spans 339 residues: Protein-glutamate methylesterase/protein-glutamine glutaminase (339 aa).

The region spanning 2–119 (RIGVVNDMPM…EGNASSQSAR (118 aa)) is the Response regulatory domain. 4-aspartylphosphate is present on Asp53. Residues 149-338 (PTPRRLIAIG…SRIIEACERS (190 aa)) form the CheB-type methylesterase domain. Residues Ser160, His187, and Asp280 contribute to the active site.

This sequence belongs to the CheB family. Post-translationally, phosphorylated by CheA. Phosphorylation of the N-terminal regulatory domain activates the methylesterase activity.

It localises to the cytoplasm. It catalyses the reaction [protein]-L-glutamate 5-O-methyl ester + H2O = L-glutamyl-[protein] + methanol + H(+). The enzyme catalyses L-glutaminyl-[protein] + H2O = L-glutamyl-[protein] + NH4(+). Its function is as follows. Involved in chemotaxis. Part of a chemotaxis signal transduction system that modulates chemotaxis in response to various stimuli. Catalyzes the demethylation of specific methylglutamate residues introduced into the chemoreceptors (methyl-accepting chemotaxis proteins or MCP) by CheR. Also mediates the irreversible deamidation of specific glutamine residues to glutamic acid. In Mesorhizobium japonicum (strain LMG 29417 / CECT 9101 / MAFF 303099) (Mesorhizobium loti (strain MAFF 303099)), this protein is Protein-glutamate methylesterase/protein-glutamine glutaminase.